Reading from the N-terminus, the 250-residue chain is Homeobox protein DLL-1 (250 aa).

2 disordered regions span residues 40-66 (YPSLHCLHSGSHHHPQHQHDTNYSGSN) and 84-106 (SPYLQSCNSNTTTQSRAEEPDQQ). The span at 84 to 98 (SPYLQSCNSNTTTQS) shows a compositional bias: polar residues. Residues 125–184 (IRKPRTIYSSLQLQALNHRFQQTQYLALPERAELAASLGVTQTQVKIWFQNKRSKYKKLI) constitute a DNA-binding region (homeobox).

This sequence belongs to the distal-less homeobox family.

It is found in the nucleus. In Xenopus laevis (African clawed frog), this protein is Homeobox protein DLL-1 (dll1).